A 364-amino-acid chain; its full sequence is Homeobox protein Nkx-2.3 (364 aa).

The interval 132–153 (GDCKAAEESERPKPRSRRKPRV) is disordered. Residues 135–144 (KAAEESERPK) show a composition bias toward basic and acidic residues. The segment at residues 148 to 207 (RRKPRVLFSQAQVFELERRFKQQRYLSAPEREHLASSLKLTSTQVKIWFQNRRYKCKRQR) is a DNA-binding region (homeobox).

Belongs to the NK-2 homeobox family.

It localises to the nucleus. Its function is as follows. Transcription factor. The sequence is that of Homeobox protein Nkx-2.3 (NKX2-3) from Homo sapiens (Human).